We begin with the raw amino-acid sequence, 342 residues long: Glucan endo-1,3-beta-glucosidase (342 aa).

The first 26 residues, 1 to 26 (MLASSPMLLFLLSLLMAYNFDTTAGQ), serve as a signal peptide directing secretion. The active-site Proton donor is the glutamate 119. The active-site Nucleophile is the glutamate 261.

Belongs to the glycosyl hydrolase 17 family. In terms of processing, the N-terminus is blocked.

It is found in the vacuole. It carries out the reaction Hydrolysis of (1-&gt;3)-beta-D-glucosidic linkages in (1-&gt;3)-beta-D-glucans.. In terms of biological role, is thought to be an important plant defense-related product against fungal pathogens. Accumulation of the glucanase can be detected as early as 4 hours after inoculation. The chain is Glucan endo-1,3-beta-glucosidase (BGL) from Brassica campestris (Field mustard).